Consider the following 67-residue polypeptide: Small ribosomal subunit protein eS27 (67 aa).

Positions 22, 25, 41, and 44 each coordinate Zn(2+). A C4-type zinc finger spans residues 22-44; sequence CPDCGNEQVTFSHAAMVVRCLVC.

Belongs to the eukaryotic ribosomal protein eS27 family. As to quaternary structure, part of the 30S ribosomal subunit. Zn(2+) serves as cofactor.

The chain is Small ribosomal subunit protein eS27 from Pyrobaculum neutrophilum (strain DSM 2338 / JCM 9278 / NBRC 100436 / V24Sta) (Thermoproteus neutrophilus).